The following is a 131-amino-acid chain: Large ribosomal subunit protein bL19 (131 aa).

The protein belongs to the bacterial ribosomal protein bL19 family.

In terms of biological role, this protein is located at the 30S-50S ribosomal subunit interface and may play a role in the structure and function of the aminoacyl-tRNA binding site. The chain is Large ribosomal subunit protein bL19 from Rhodopseudomonas palustris (strain HaA2).